Here is a 116-residue protein sequence, read N- to C-terminus: Protein RALF-like 33 (116 aa).

Positions 1-23 (MRGLSTKPVAIIIAILTVHFLFA) are cleaved as a signal peptide. Residues 24–67 (AVTSQSSGDFVPIESKCNGTIAECSLSTAEEEFEMDSEINRRIL) constitute a propeptide, removed in mature form. A glycan (N-linked (GlcNAc...) asparagine) is linked at Asn-41. Cystine bridges form between Cys-85–Cys-95 and Cys-108–Cys-114.

The protein belongs to the plant rapid alkalinization factor (RALF) family. In terms of processing, proteolytically cleaved, probably by S1P, a subtilisin-like serine protease (subtilase). In terms of tissue distribution, expressed in roots, stems, leaves and plants.

It localises to the secreted. Functionally, cell signaling peptide that may regulate plant stress, growth, and development. Mediates a rapid alkalinization of extracellular space by mediating a transient increase in the cytoplasmic Ca(2+) concentration leading to a calcium-dependent signaling events through a cell surface receptor and a concomitant activation of some intracellular mitogen-activated protein kinases. In Arabidopsis thaliana (Mouse-ear cress), this protein is Protein RALF-like 33 (RALFL33).